Reading from the N-terminus, the 157-residue chain is Crossover junction endodeoxyribonuclease RuvC (157 aa).

Active-site residues include Asp-7, Glu-67, and Asp-140. Mg(2+) contacts are provided by Asp-7, Glu-67, and Asp-140.

It belongs to the RuvC family. In terms of assembly, homodimer which binds Holliday junction (HJ) DNA. The HJ becomes 2-fold symmetrical on binding to RuvC with unstacked arms; it has a different conformation from HJ DNA in complex with RuvA. In the full resolvosome a probable DNA-RuvA(4)-RuvB(12)-RuvC(2) complex forms which resolves the HJ. Requires Mg(2+) as cofactor.

It localises to the cytoplasm. It carries out the reaction Endonucleolytic cleavage at a junction such as a reciprocal single-stranded crossover between two homologous DNA duplexes (Holliday junction).. Functionally, the RuvA-RuvB-RuvC complex processes Holliday junction (HJ) DNA during genetic recombination and DNA repair. Endonuclease that resolves HJ intermediates. Cleaves cruciform DNA by making single-stranded nicks across the HJ at symmetrical positions within the homologous arms, yielding a 5'-phosphate and a 3'-hydroxyl group; requires a central core of homology in the junction. The consensus cleavage sequence is 5'-(A/T)TT(C/G)-3'. Cleavage occurs on the 3'-side of the TT dinucleotide at the point of strand exchange. HJ branch migration catalyzed by RuvA-RuvB allows RuvC to scan DNA until it finds its consensus sequence, where it cleaves and resolves the cruciform DNA. This is Crossover junction endodeoxyribonuclease RuvC from Thermosipho melanesiensis (strain DSM 12029 / CIP 104789 / BI429).